A 111-amino-acid chain; its full sequence is Toxin 3FTx-Tri2 (111 aa).

The first 19 residues, 1–19 (MKTLLLALVVLAFVCLGSA), serve as a signal peptide directing secretion. A propeptide spanning residues 20–34 (DQVGLGKEQIDRGRR) is cleaved from the precursor. Glutamine 35 is subject to Pyrrolidone carboxylic acid. 5 cysteine pairs are disulfide-bonded: cysteine 44/cysteine 68, cysteine 47/cysteine 55, cysteine 61/cysteine 87, cysteine 91/cysteine 102, and cysteine 103/cysteine 108.

This sequence belongs to the three-finger toxin family. Ancestral subfamily. Boigatoxin sub-subfamily. Expressed by the venom gland.

It is found in the secreted. Functionally, potent postsynaptic neurotoxin. Displays readily reversible competitive antagonism at the nicotinic acetylcholine receptor (nAChR). The polypeptide is Toxin 3FTx-Tri2 (Trimorphodon biscutatus (Western lyre snake)).